Consider the following 257-residue polypeptide: Type III pantothenate kinase (257 aa).

6-13 (DSGNTNTV) lines the ATP pocket. Substrate is bound at residue 108 to 111 (GADR). Catalysis depends on Asp-110, which acts as the Proton acceptor. Asp-130 lines the K(+) pocket. Thr-133 lines the ATP pocket. Thr-185 provides a ligand contact to substrate.

It belongs to the type III pantothenate kinase family. As to quaternary structure, homodimer. Requires NH4(+) as cofactor. K(+) is required as a cofactor.

It localises to the cytoplasm. The catalysed reaction is (R)-pantothenate + ATP = (R)-4'-phosphopantothenate + ADP + H(+). It functions in the pathway cofactor biosynthesis; coenzyme A biosynthesis; CoA from (R)-pantothenate: step 1/5. Functionally, catalyzes the phosphorylation of pantothenate (Pan), the first step in CoA biosynthesis. This Rhodospirillum rubrum (strain ATCC 11170 / ATH 1.1.1 / DSM 467 / LMG 4362 / NCIMB 8255 / S1) protein is Type III pantothenate kinase.